Here is an 843-residue protein sequence, read N- to C-terminus: OTU domain-containing protein 7B (843 aa).

The disordered stretch occupies residues 50–88; it reads GNLPPSFSEGSGGSRTPEKGFSDREPTRPPRPILQRQDD. Residues 65–77 show a composition bias toward basic and acidic residues; it reads TPEKGFSDREPTR. Ser-100 carries the post-translational modification Phosphoserine. Residues 152 to 401 are TRAF-binding; sequence ERDLIEQSML…AVDPGKGWEW (250 aa). Positions 167–440 are catalytic; it reads AGRLNWWVSV…VKWIPLSSDA (274 aa). One can recognise an OTU domain in the interval 183-365; it reads LLPLATTGDG…QAHFSALVSM (183 aa). Residues 187–193 form a regulatory loop region; it reads ATTGDGN. The active site involves Asp-191. Cys-194 (nucleophile) is an active-site residue. His-358 functions as the Proton acceptor in the catalytic mechanism. Disordered regions lie at residues 442-587 and 652-711; these read APLA…GGSK and IMNG…CQEP. Composition is skewed to basic and acidic residues over residues 456-471 and 488-500; these read DEPRSTPESGDSDKES and SKRDREKDKKRAD. Ser-464, Ser-467, and Ser-471 each carry phosphoserine. The Nuclear localization signal signature appears at 483 to 498; the sequence is RRKEKSKRDREKDKKR. The span at 531 to 543 shows a compositional bias: gly residues; the sequence is KPGGVGTGLGGSS. Positions 665 to 675 are enriched in basic and acidic residues; the sequence is KKPEPDAREEQ. Phosphothreonine is present on Thr-729. Positions 732–792 are disordered; the sequence is RQCPPGRPYP…PEPDGWAGGL (61 aa). The A20-type zinc finger occupies 796–831; the sequence is PPTQTKCKQPNCSFYGHPETNNFCSCCYREELRRRE. Zn(2+)-binding residues include Cys-802, Cys-807, Cys-819, and Cys-822.

This sequence belongs to the peptidase C64 family. In terms of assembly, interacts with ZAP70 in activated T cells, but not in resting T cells. Interacts with TRAF3. Interacts with TRAF6. Interacts with PARK7, leading to inhibit deubiquitinase activity. Interacts with EGFR, ITCH and NEDD4. Post-translationally, phosphorylated by EGFR. As to expression, widely expressed. Abundant in kidney, heart and fetal liver. Expressed differentially among B-cells at distinct developmental stages. Higher expression seen in primary immature B-cells as compared to the mature cells.

The protein resides in the cytoplasm. The protein localises to the nucleus. The enzyme catalyses Thiol-dependent hydrolysis of ester, thioester, amide, peptide and isopeptide bonds formed by the C-terminal Gly of ubiquitin (a 76-residue protein attached to proteins as an intracellular targeting signal).. Deubiquitinase activity is inhibited following interaction with PARK7. Negative regulator of the non-canonical NF-kappa-B pathway that acts by mediating deubiquitination of TRAF3, an inhibitor of the NF-kappa-B pathway, thereby acting as a negative regulator of B-cell responses. In response to non-canonical NF-kappa-B stimuli, deubiquitinates 'Lys-48'-linked polyubiquitin chains of TRAF3, preventing TRAF3 proteolysis and over-activation of non-canonical NF-kappa-B. Negatively regulates mucosal immunity against infections. Deubiquitinates ZAP70, and thereby regulates T cell receptor (TCR) signaling that leads to the activation of NF-kappa-B. Plays a role in T cell homeostasis and is required for normal T cell responses, including production of IFNG and IL2. Mediates deubiquitination of EGFR. Has deubiquitinating activity toward 'Lys-11', 'Lys-48' and 'Lys-63'-linked polyubiquitin chains. Has a much higher catalytic rate with 'Lys-11'-linked polyubiquitin chains (in vitro); however the physiological significance of these data are unsure. Hydrolyzes both linear and branched forms of polyubiquitin. Acts as a regulator of mTORC1 and mTORC2 assembly by mediating 'Lys-63'-linked deubiquitination of MLST8, thereby promoting assembly of the mTORC2 complex, while inibiting formation of the mTORC1 complex. The sequence is that of OTU domain-containing protein 7B (OTUD7B) from Homo sapiens (Human).